We begin with the raw amino-acid sequence, 200 residues long: Late embryogenesis abundant protein 19 (200 aa).

Disordered stretches follow at residues 1-145 and 172-200; these read MASH…KTGS and TEDE…ARDH. Basic and acidic residues-rich tracts occupy residues 13–23, 30–42, 53–81, 88–97, and 105–114; these read GETKAHTEEKA, SKDK…DRAS, QDTK…KDKT, ARDKAAESKD, and EKTEQAKQKA. Residues 52-81 are a coiled coil; it reads GQDTKEATKEKAQAAKERASETAQAAKDKT. Low complexity-rich tracts occupy residues 115 to 130 and 186 to 200; these read AETA…ETAQ and TSAT…ARDH.

This sequence belongs to the LEA type 4 family.

In terms of biological role, involved in response to stress. This chain is Late embryogenesis abundant protein 19, found in Oryza sativa subsp. japonica (Rice).